We begin with the raw amino-acid sequence, 130 residues long: Profilin-12 (130 aa).

The cysteines at positions 13 and 115 are disulfide-linked. The short motif at 81–97 (AVIRGKKGSGGITVKKT) is the Involved in PIP2 interaction element. A Phosphothreonine modification is found at T111.

It belongs to the profilin family. As to quaternary structure, occurs in many kinds of cells as a complex with monomeric actin in a 1:1 ratio. Post-translationally, phosphorylated by MAP kinases.

Its subcellular location is the cytoplasm. The protein resides in the cytoskeleton. Functionally, binds to actin and affects the structure of the cytoskeleton. At high concentrations, profilin prevents the polymerization of actin, whereas it enhances it at low concentrations. The chain is Profilin-12 from Zea mays (Maize).